Reading from the N-terminus, the 147-residue chain is Hemoglobin subunit epsilon (147 aa).

One can recognise a Globin domain in the interval 3–147 (HFTAEEKSTI…VATALAHKYH (145 aa)). Residues S14 and S51 each carry the phosphoserine modification. 2 residues coordinate heme b: H64 and H93.

This sequence belongs to the globin family. As to quaternary structure, heterotetramer of two alpha chains and two epsilon chains in early embryonic hemoglobin Gower-2; two zeta chains and two epsilon chains in early embryonic hemoglobin Gower-1. As to expression, red blood cells.

In terms of biological role, the epsilon chain is a beta-type chain of early mammalian embryonic hemoglobin. The polypeptide is Hemoglobin subunit epsilon (HBE1) (Cheirogaleus medius (Fat-tailed dwarf lemur)).